We begin with the raw amino-acid sequence, 222 residues long: uncharacterized protein (222 aa).

6 N-linked (GlcNAc...) asparagine; by host glycosylation sites follow: asparagine 4, asparagine 75, asparagine 84, asparagine 104, asparagine 170, and asparagine 175. The chain crosses the membrane as a helical span at residues 200 to 220 (LIIIIGIVIILLLIIVMIKTV).

It is found in the membrane. This is an uncharacterized protein from Acanthamoeba polyphaga (Amoeba).